The sequence spans 202 residues: PXMP2/4 family protein 1 (202 aa).

Helical transmembrane passes span Pro-21 to Gln-41, Leu-54 to Phe-72, Lys-138 to Val-154, and Leu-161 to Val-177.

The protein belongs to the peroxisomal membrane protein PXMP2/4 family.

It localises to the membrane. This is PXMP2/4 family protein 1 from Dictyostelium discoideum (Social amoeba).